The sequence spans 148 residues: Lysozyme-like protein 1 (148 aa).

Positions 1 to 19 (MKSVGVFALIISFSIVAES) are cleaved as a signal peptide. The region spanning 20–148 (KIYTRCKLAK…SEWKRGCEVS (129 aa)) is the C-type lysozyme domain. Intrachain disulfides connect C25–C145, C49–C133, C83–C98, and C94–C112. E54 is an active-site residue. N58 is a glycosylation site (N-linked (GlcNAc...) asparagine). D71 is a catalytic residue.

Belongs to the glycosyl hydrolase 22 family. Monomer.

The protein localises to the secreted. It carries out the reaction Hydrolysis of (1-&gt;4)-beta-linkages between N-acetylmuramic acid and N-acetyl-D-glucosamine residues in a peptidoglycan and between N-acetyl-D-glucosamine residues in chitodextrins.. This Mus musculus (Mouse) protein is Lysozyme-like protein 1 (Lyzl1).